The sequence spans 697 residues: Putative flagellar export/assembly protein LfhA (697 aa).

7 consecutive transmembrane segments (helical) span residues 19–39 (VPLV…PALL), 40–60 (DILF…AVSA), 66–86 (FSLF…LNVA), 116–136 (GNFV…FIVV), 204–224 (AIAG…IGIF), 242–262 (IGDG…AAII), and 280–302 (LLAS…VVPG).

It belongs to the FHIPEP (flagella/HR/invasion proteins export pore) family.

It localises to the cell inner membrane. In terms of biological role, part of the flagellar gene cluster Flag-2. However, the Flag-2 flagellar system could be inactive in strain 042 due to a frameshift in lfgC. The sequence is that of Putative flagellar export/assembly protein LfhA from Escherichia coli O44:H18 (strain 042 / EAEC).